The sequence spans 359 residues: Cytoplasmic tRNA 2-thiolation protein 2 (359 aa).

The protein belongs to the CTU2/NCS2 family.

The protein resides in the cytoplasm. Its pathway is tRNA modification; 5-methoxycarbonylmethyl-2-thiouridine-tRNA biosynthesis. In terms of biological role, plays a central role in 2-thiolation of mcm(5)S(2)U at tRNA wobble positions of tRNA(Lys), tRNA(Glu) and tRNA(Gln). May act by forming a heterodimer with NCS6 that ligates sulfur from thiocarboxylated URM1 onto the uridine of tRNAs at wobble position. Prior mcm(5) tRNA modification by the elongator complex is required for 2-thiolation. May also be involved in protein urmylation. The protein is Cytoplasmic tRNA 2-thiolation protein 2 of Ajellomyces capsulatus (strain NAm1 / WU24) (Darling's disease fungus).